Reading from the N-terminus, the 242-residue chain is Small ribosomal subunit protein uS2 (242 aa).

Belongs to the universal ribosomal protein uS2 family.

This chain is Small ribosomal subunit protein uS2, found in Aeromonas hydrophila subsp. hydrophila (strain ATCC 7966 / DSM 30187 / BCRC 13018 / CCUG 14551 / JCM 1027 / KCTC 2358 / NCIMB 9240 / NCTC 8049).